A 421-amino-acid chain; its full sequence is Serine--tRNA ligase (421 aa).

Position 229–231 (229–231) interacts with L-serine; that stretch reads TAE. 260-262 is an ATP binding site; it reads RAE. Residue E283 coordinates L-serine. 347–350 serves as a coordination point for ATP; sequence EISS. L-serine is bound at residue S383.

The protein belongs to the class-II aminoacyl-tRNA synthetase family. Type-1 seryl-tRNA synthetase subfamily. As to quaternary structure, homodimer. The tRNA molecule binds across the dimer.

It localises to the cytoplasm. The enzyme catalyses tRNA(Ser) + L-serine + ATP = L-seryl-tRNA(Ser) + AMP + diphosphate + H(+). It carries out the reaction tRNA(Sec) + L-serine + ATP = L-seryl-tRNA(Sec) + AMP + diphosphate + H(+). It functions in the pathway aminoacyl-tRNA biosynthesis; selenocysteinyl-tRNA(Sec) biosynthesis; L-seryl-tRNA(Sec) from L-serine and tRNA(Sec): step 1/1. Catalyzes the attachment of serine to tRNA(Ser). Is also able to aminoacylate tRNA(Sec) with serine, to form the misacylated tRNA L-seryl-tRNA(Sec), which will be further converted into selenocysteinyl-tRNA(Sec). The polypeptide is Serine--tRNA ligase (Desulfitobacterium hafniense (strain Y51)).